The following is a 178-amino-acid chain: Endoribonuclease YbeY (178 aa).

Residues H118, H122, and H128 each coordinate Zn(2+).

The protein belongs to the endoribonuclease YbeY family. Zn(2+) serves as cofactor.

It is found in the cytoplasm. Its function is as follows. Single strand-specific metallo-endoribonuclease involved in late-stage 70S ribosome quality control and in maturation of the 3' terminus of the 16S rRNA. The sequence is that of Endoribonuclease YbeY from Mycolicibacterium gilvum (strain PYR-GCK) (Mycobacterium gilvum (strain PYR-GCK)).